Consider the following 600-residue polypeptide: MTSSLPVRAPSWVSSRRIFEERLQDLPKCANLNQVKQLHAQIIRRNLHEDLHIAPKLISALSLCRQTNLAVRVFNQVQEPNVHLCNSLIRAHAQNSQPYQAFFVFSEMQRFGLFADNFTYPFLLKACSGQSWLPVVKMMHNHIEKLGLSSDIYVPNALIDCYSRCGGLGVRDAMKLFEKMSERDTVSWNSMLGGLVKAGELRDARRLFDEMPQRDLISWNTMLDGYARCREMSKAFELFEKMPERNTVSWSTMVMGYSKAGDMEMARVMFDKMPLPAKNVVTWTIIIAGYAEKGLLKEADRLVDQMVASGLKFDAAAVISILAACTESGLLSLGMRIHSILKRSNLGSNAYVLNALLDMYAKCGNLKKAFDVFNDIPKKDLVSWNTMLHGLGVHGHGKEAIELFSRMRREGIRPDKVTFIAVLCSCNHAGLIDEGIDYFYSMEKVYDLVPQVEHYGCLVDLLGRVGRLKEAIKVVQTMPMEPNVVIWGALLGACRMHNEVDIAKEVLDNLVKLDPCDPGNYSLLSNIYAAAEDWEGVADIRSKMKSMGVEKPSGASSVELEDGIHEFTVFDKSHPKSDQIYQMLGSLIEPPDPGELVAVR.

13 PPR repeats span residues 50–80 (DLHI…VQEP), 81–115 (NVHL…GLFA), 116–150 (DNFT…GLSS), 151–183 (DIYV…MSER), 184–218 (DTVS…DLIS), 219–245 (WNTM…MPER), 246–276 (NTVS…MPLP), 279–313 (NVVT…GLKF), 314–348 (DAAA…NLGS), 349–379 (NAYV…IPKK), 380–414 (DLVS…GIRP), 415–445 (DKVT…MEKV), and 451–481 (QVEH…MPME). A type E motif region spans residues 486 to 561 (IWGALLGACR…PSGASSVELE (76 aa)). A type E(+) motif region spans residues 562–592 (DGIHEFTVFDKSHPKSDQIYQMLGSLIEPPD).

It belongs to the PPR family. PCMP-E subfamily.

The chain is Pentatricopeptide repeat-containing protein At3g29230 (PCMP-E27) from Arabidopsis thaliana (Mouse-ear cress).